The chain runs to 384 residues: 8-amino-7-oxononanoate synthase (384 aa).

Position 21 (Arg-21) interacts with substrate. A pyridoxal 5'-phosphate-binding site is contributed by 108–109; that stretch reads GF. His-133 contacts substrate. Pyridoxal 5'-phosphate is bound by residues Ser-179, His-207, and Thr-233. N6-(pyridoxal phosphate)lysine is present on Lys-236. Substrate is bound at residue Thr-352.

It belongs to the class-II pyridoxal-phosphate-dependent aminotransferase family. BioF subfamily. In terms of assembly, homodimer. Pyridoxal 5'-phosphate is required as a cofactor.

It catalyses the reaction 6-carboxyhexanoyl-[ACP] + L-alanine + H(+) = (8S)-8-amino-7-oxononanoate + holo-[ACP] + CO2. It participates in cofactor biosynthesis; biotin biosynthesis. Functionally, catalyzes the decarboxylative condensation of pimeloyl-[acyl-carrier protein] and L-alanine to produce 8-amino-7-oxononanoate (AON), [acyl-carrier protein], and carbon dioxide. The polypeptide is 8-amino-7-oxononanoate synthase (Escherichia coli O8 (strain IAI1)).